The following is a 645-amino-acid chain: UvrABC system protein C (645 aa).

One can recognise a GIY-YIG domain in the interval 12 to 91; sequence TGPGVYLYKN…IKQRKPRFNV (80 aa). The UVR domain maps to 202–237; that stretch reads ADLERSLEVRMQEAAAAEQFELAAKYRDLLVTLHQL.

This sequence belongs to the UvrC family. Interacts with UvrB in an incision complex.

The protein resides in the cytoplasm. Functionally, the UvrABC repair system catalyzes the recognition and processing of DNA lesions. UvrC both incises the 5' and 3' sides of the lesion. The N-terminal half is responsible for the 3' incision and the C-terminal half is responsible for the 5' incision. The chain is UvrABC system protein C from Acidobacterium capsulatum (strain ATCC 51196 / DSM 11244 / BCRC 80197 / JCM 7670 / NBRC 15755 / NCIMB 13165 / 161).